Consider the following 221-residue polypeptide: 7-cyano-7-deazaguanine synthase (221 aa).

Residue 7-17 (LSGGMDSSTLA) coordinates ATP. The Zn(2+) site is built by cysteine 187, cysteine 195, cysteine 198, and cysteine 201.

Belongs to the QueC family. The cofactor is Zn(2+).

The catalysed reaction is 7-carboxy-7-deazaguanine + NH4(+) + ATP = 7-cyano-7-deazaguanine + ADP + phosphate + H2O + H(+). It functions in the pathway purine metabolism; 7-cyano-7-deazaguanine biosynthesis. Catalyzes the ATP-dependent conversion of 7-carboxy-7-deazaguanine (CDG) to 7-cyano-7-deazaguanine (preQ(0)). The protein is 7-cyano-7-deazaguanine synthase of Methanosphaerula palustris (strain ATCC BAA-1556 / DSM 19958 / E1-9c).